We begin with the raw amino-acid sequence, 296 residues long: 4-hydroxybenzoate octaprenyltransferase (296 aa).

Helical transmembrane passes span 23–43 (IGIL…SPGW), 46–66 (GLVL…GCVM), 99–119 (LALA…PLVV), 141–161 (IPQA…FAAI), 163–183 (GQLP…AIAY), 211–231 (DVFA…WVGV), 237–257 (WPYF…YALI), and 265–285 (CFKA…GVLA).

The protein belongs to the UbiA prenyltransferase family. Mg(2+) serves as cofactor.

It localises to the cell inner membrane. The enzyme catalyses all-trans-octaprenyl diphosphate + 4-hydroxybenzoate = 4-hydroxy-3-(all-trans-octaprenyl)benzoate + diphosphate. It functions in the pathway cofactor biosynthesis; ubiquinone biosynthesis. Functionally, catalyzes the prenylation of para-hydroxybenzoate (PHB) with an all-trans polyprenyl group. Mediates the second step in the final reaction sequence of ubiquinone-8 (UQ-8) biosynthesis, which is the condensation of the polyisoprenoid side chain with PHB, generating the first membrane-bound Q intermediate 3-octaprenyl-4-hydroxybenzoate. This chain is 4-hydroxybenzoate octaprenyltransferase, found in Methylobacillus flagellatus (strain ATCC 51484 / DSM 6875 / VKM B-1610 / KT).